Here is a 21-residue protein sequence, read N- to C-terminus: Cold shock protein CspSt (21 aa).

One can recognise a CSD domain in the interval 1–21; sequence KNGTVKWFNAEKGFGFITSED.

It is found in the cytoplasm. The protein is Cold shock protein CspSt of Streptococcus thermophilus.